The primary structure comprises 326 residues: Pyruvate dehydrogenase E1 component subunit alpha (326 aa).

As to quaternary structure, heterodimer of an alpha and a beta chain. It depends on thiamine diphosphate as a cofactor.

It catalyses the reaction N(6)-[(R)-lipoyl]-L-lysyl-[protein] + pyruvate + H(+) = N(6)-[(R)-S(8)-acetyldihydrolipoyl]-L-lysyl-[protein] + CO2. Its function is as follows. The pyruvate dehydrogenase complex catalyzes the overall conversion of pyruvate to acetyl-CoA and CO(2). It contains multiple copies of three enzymatic components: pyruvate dehydrogenase (E1), dihydrolipoamide acetyltransferase (E2) and lipoamide dehydrogenase (E3). In Rickettsia prowazekii (strain Madrid E), this protein is Pyruvate dehydrogenase E1 component subunit alpha (pdhA).